A 754-amino-acid polypeptide reads, in one-letter code: NAD(P)H-quinone oxidoreductase subunit 5, chloroplastic (754 aa).

The next 16 membrane-spanning stretches (helical) occupy residues 8-28, 40-60, 89-109, 125-145, 147-167, 185-205, 219-239, 258-278, 280-300, 327-347, 354-374, 396-416, 425-445, 552-572, 608-628, and 733-753; these read FWII…GLLL, WVFP…YLAI, VDPL…LVLI, FAYM…SNLI, IYFF…FWFT, GDFG…SLEF, NEVN…GAIA, TPIS…FLGA, LLPL…LGII, LGYM…FHLI, ALLF…VGYS, TSFL…CFWS, WLYS…TAFY, FSML…IPFF, FITN…IASF, and LVYI…VLFF.

The protein belongs to the complex I subunit 5 family. NDH is composed of at least 16 different subunits, 5 of which are encoded in the nucleus.

The protein localises to the plastid. The protein resides in the chloroplast thylakoid membrane. The catalysed reaction is a plastoquinone + NADH + (n+1) H(+)(in) = a plastoquinol + NAD(+) + n H(+)(out). It catalyses the reaction a plastoquinone + NADPH + (n+1) H(+)(in) = a plastoquinol + NADP(+) + n H(+)(out). In terms of biological role, NDH shuttles electrons from NAD(P)H:plastoquinone, via FMN and iron-sulfur (Fe-S) centers, to quinones in the photosynthetic chain and possibly in a chloroplast respiratory chain. The immediate electron acceptor for the enzyme in this species is believed to be plastoquinone. Couples the redox reaction to proton translocation, and thus conserves the redox energy in a proton gradient. The sequence is that of NAD(P)H-quinone oxidoreductase subunit 5, chloroplastic (ndhF) from Morus indica (Mulberry).